The following is a 231-amino-acid chain: MATSSTQLLLSSSSLFHSQITKKPFLLPATKIGVWRPKKSLSLSCRPSASVSAASSAVDVNESVTSEKPTKTLPFRIGHGFDLHRLEPGYPLIIGGIVIPHDRGCEAHSDGDVLLHCVVDAILGALGLPDIGQIFPDSDPKWKGAASSVFIKEAVRLMDEAGYEIGNLDATLILQRPKISPHKETIRSNLSKLLGADPSVVNLKAKTHEKVDSLGENRSIAAHTVILLMKK.

A chloroplast-targeting transit peptide spans 1–52; sequence MATSSTQLLLSSSSLFHSQITKKPFLLPATKIGVWRPKKSLSLSCRPSASVS. A divalent metal cation-binding residues include Asp82 and His84. Substrate-binding positions include 82–84, 108–109, 112–120, 130–132, 135–139, Asp139, 174–180, and 205–209; these read DLH, HS, DVLLHCVVD, DIG, FPDSD, LQRPKIS, and AKTHE. His116 contacts a divalent metal cation.

Belongs to the IspF family. Homotrimer. A divalent metal cation serves as cofactor.

The protein localises to the plastid. The protein resides in the chloroplast stroma. The catalysed reaction is 4-CDP-2-C-methyl-D-erythritol 2-phosphate = 2-C-methyl-D-erythritol 2,4-cyclic diphosphate + CMP. The protein operates within isoprenoid biosynthesis; isopentenyl diphosphate biosynthesis via DXP pathway; isopentenyl diphosphate from 1-deoxy-D-xylulose 5-phosphate: step 4/6. Functionally, enzyme of the plastid non-mevalonate pathway for isoprenoid biosynthesis that converts 4-diphosphocytidyl-2C-methyl-D-erythritol 2-phosphate into 2C-methyl-D-erythritol 2,4-cyclodiphosphate and CMP. Is essential for chloroplast development. The polypeptide is 2-C-methyl-D-erythritol 2,4-cyclodiphosphate synthase, chloroplastic (Arabidopsis thaliana (Mouse-ear cress)).